The chain runs to 219 residues: Ribosomal RNA small subunit methyltransferase G (219 aa).

S-adenosyl-L-methionine is bound by residues Gly-85, Leu-90, 136–137, and Arg-151; that span reads VE.

The protein belongs to the methyltransferase superfamily. RNA methyltransferase RsmG family.

Its subcellular location is the cytoplasm. The catalysed reaction is guanosine(527) in 16S rRNA + S-adenosyl-L-methionine = N(7)-methylguanosine(527) in 16S rRNA + S-adenosyl-L-homocysteine. Functionally, specifically methylates the N7 position of guanine in position 527 of 16S rRNA. The sequence is that of Ribosomal RNA small subunit methyltransferase G from Cellvibrio japonicus (strain Ueda107) (Pseudomonas fluorescens subsp. cellulosa).